The chain runs to 99 residues: Signal recognition particle 19 kDa protein (99 aa).

It belongs to the SRP19 family. As to quaternary structure, part of the signal recognition particle protein translocation system, which is composed of SRP and FtsY. Archaeal SRP consists of a 7S RNA molecule of 300 nucleotides and two protein subunits: SRP54 and SRP19.

It is found in the cytoplasm. In terms of biological role, involved in targeting and insertion of nascent membrane proteins into the cytoplasmic membrane. Binds directly to 7S RNA and mediates binding of the 54 kDa subunit of the SRP. The sequence is that of Signal recognition particle 19 kDa protein from Pyrococcus abyssi (strain GE5 / Orsay).